A 245-amino-acid polypeptide reads, in one-letter code: 1-(5-phosphoribosyl)-5-[(5-phosphoribosylamino)methylideneamino] imidazole-4-carboxamide isomerase (245 aa).

Catalysis depends on aspartate 7, which acts as the Proton acceptor. Aspartate 129 serves as the catalytic Proton donor.

It belongs to the HisA/HisF family.

Its subcellular location is the cytoplasm. It carries out the reaction 1-(5-phospho-beta-D-ribosyl)-5-[(5-phospho-beta-D-ribosylamino)methylideneamino]imidazole-4-carboxamide = 5-[(5-phospho-1-deoxy-D-ribulos-1-ylimino)methylamino]-1-(5-phospho-beta-D-ribosyl)imidazole-4-carboxamide. Its pathway is amino-acid biosynthesis; L-histidine biosynthesis; L-histidine from 5-phospho-alpha-D-ribose 1-diphosphate: step 4/9. This is 1-(5-phosphoribosyl)-5-[(5-phosphoribosylamino)methylideneamino] imidazole-4-carboxamide isomerase from Shigella boydii serotype 4 (strain Sb227).